The primary structure comprises 1106 residues: GYF domain-containing protein gyf-1 (1106 aa).

A compositionally biased stretch (polar residues) spans 1 to 17 (MSSVSSAEPTAQQNFNP). 3 disordered regions span residues 1–50 (MSSV…GGFD), 160–370 (GALQ…DSTV), and 383–434 (KAST…SAWS). Positions 30-42 (RGGSISSGNNRSS) are enriched in low complexity. A compositionally biased stretch (polar residues) spans 162-180 (LQNGQSPTSRWAPKSSWNK). The span at 207 to 224 (GRGGGRIGGENGFGGATN) shows a compositional bias: gly residues. The segment covering 229-243 (AAQNEDSPGTYQSKF) has biased composition (polar residues). Positions 248-261 (RGGGAGSVGRGGST) are enriched in gly residues. A compositionally biased stretch (polar residues) spans 306 to 322 (VGSTSRTSTNAAPQSSE). Low complexity-rich tracts occupy residues 334–353 (QRTQ…QQAQ) and 390–410 (PPQQ…APSR). The 50-residue stretch at 459–508 (PVQFYYMDPTETRRGPFPKDQMNVWFKAGYFTDESLRVQRGENGEYKTIG) folds into the GYF domain. The stretch at 584-746 (LDDHNRRLAE…ERKRAAERER (163 aa)) forms a coiled coil. Disordered stretches follow at residues 778–811 (AFTG…KTAP), 909–928 (KNSQ…SAKV), 1026–1076 (AGGR…DGNI), and 1087–1106 (RLNK…PSRR). A compositionally biased stretch (polar residues) spans 786 to 801 (VSPSGSEESDEWISTS). The segment covering 1046-1057 (SDSNSGSNSNSG) has biased composition (low complexity).

This is GYF domain-containing protein gyf-1 from Caenorhabditis elegans.